Consider the following 103-residue polypeptide: Large ribosomal subunit protein uL24 (103 aa).

It belongs to the universal ribosomal protein uL24 family. Part of the 50S ribosomal subunit.

Functionally, one of two assembly initiator proteins, it binds directly to the 5'-end of the 23S rRNA, where it nucleates assembly of the 50S subunit. One of the proteins that surrounds the polypeptide exit tunnel on the outside of the subunit. The chain is Large ribosomal subunit protein uL24 from Haemophilus influenzae (strain PittEE).